The sequence spans 293 residues: LysM and putative peptidoglycan-binding domain-containing protein 4 (293 aa).

At 1–214 (MRQKEVLAKS…VADGADCGIQ (214 aa)) the chain is on the extracellular side. Residues 28–65 (FNNGSGDSGDSSEEESHQVVLRPRGKEHQKNSSQRPGA) are disordered. N-linked (GlcNAc...) asparagine glycosylation is present at N30. Positions 71–115 (LQRELAQEDSLNKLALQYGCKVADIKKANNFIREQDLYALKSIKI) constitute a LysM domain. Residues 215–235 (WWNAVFLMLLIGIVLPVFYLV) traverse the membrane as a helical segment. Residues 236–293 (YFKIQATGEPSNGLNATVVPNGSMTLSPVPGQAPRLAIPVPTLPASDSQVSPTTQAGA) lie on the Cytoplasmic side of the membrane.

Its subcellular location is the membrane. This Mus musculus (Mouse) protein is LysM and putative peptidoglycan-binding domain-containing protein 4 (Lysmd4).